The chain runs to 391 residues: GTPase Obg (391 aa).

Residues 1-159 (MKFVDEARIL…RELMLELMLL (159 aa)) form the Obg domain. Residues 160–333 (ADVGMLGMPN…LCWDIMEFMK (174 aa)) form the OBG-type G domain. Residues 166–173 (GMPNAGKS), 191–195 (FTTLV), 213–216 (DIPG), 283–286 (NKVD), and 314–316 (SAI) each bind GTP. Mg(2+) is bound by residues serine 173 and threonine 193.

This sequence belongs to the TRAFAC class OBG-HflX-like GTPase superfamily. OBG GTPase family. As to quaternary structure, monomer. Mg(2+) serves as cofactor.

The protein resides in the cytoplasm. In terms of biological role, an essential GTPase which binds GTP, GDP and possibly (p)ppGpp with moderate affinity, with high nucleotide exchange rates and a fairly low GTP hydrolysis rate. Plays a role in control of the cell cycle, stress response, ribosome biogenesis and in those bacteria that undergo differentiation, in morphogenesis control. The polypeptide is GTPase Obg (Photorhabdus laumondii subsp. laumondii (strain DSM 15139 / CIP 105565 / TT01) (Photorhabdus luminescens subsp. laumondii)).